The sequence spans 113 residues: Ribonuclease P protein component (113 aa).

It belongs to the RnpA family. As to quaternary structure, consists of a catalytic RNA component (M1 or rnpB) and a protein subunit.

The catalysed reaction is Endonucleolytic cleavage of RNA, removing 5'-extranucleotides from tRNA precursor.. Functionally, RNaseP catalyzes the removal of the 5'-leader sequence from pre-tRNA to produce the mature 5'-terminus. It can also cleave other RNA substrates such as 4.5S RNA. The protein component plays an auxiliary but essential role in vivo by binding to the 5'-leader sequence and broadening the substrate specificity of the ribozyme. The chain is Ribonuclease P protein component from Geotalea uraniireducens (strain Rf4) (Geobacter uraniireducens).